The sequence spans 1029 residues: U2 snRNP-associated SURP motif-containing protein (1029 aa).

2 disordered regions span residues 1-111 (MADK…EDEK) and 141-274 (VNAA…PSTT). A2 is modified (N-acetylalanine). The span at 7–16 (GGSQKASSKT) shows a compositional bias: polar residues. Over residues 45 to 54 (TRPKSPRKHN) the composition is skewed to basic residues. A compositionally biased stretch (basic and acidic residues) spans 55–64 (YRNESARESL). Residue S67 is modified to Phosphoserine. A Glycyl lysine isopeptide (Lys-Gly) (interchain with G-Cter in SUMO2) cross-link involves residue K80. Residues 92–121 (AKRTLSKKEQEELKKKEDEKAAAEIYEEFL) are a coiled coil. Composition is skewed to basic and acidic residues over residues 97 to 111 (SKKE…EDEK) and 144 to 155 (AKEEHETDEKRG). Glycyl lysine isopeptide (Lys-Gly) (interchain with G-Cter in SUMO2) cross-links involve residues K145 and K168. Polar residues predominate over residues 169–178 (NPPNQSSNER). The segment covering 186 to 222 (ETKKPPLKKGEKEKKKSNLELFKEELKQIQEERDERH) has biased composition (basic and acidic residues). A coiled-coil region spans residues 192–232 (LKKGEKEKKKSNLELFKEELKQIQEERDERHKTKGRLSRFE). The residue at position 202 (S202) is a Phosphoserine. Residue K208 forms a Glycyl lysine isopeptide (Lys-Gly) (interchain with G-Cter in SUMO2) linkage. S236 is subject to Phosphoserine. A compositionally biased stretch (basic and acidic residues) spans 239–249 (DGQRRSMDAPS). The region spanning 274–355 (TNLYLGNINP…FEMKLGWGKA (82 aa)) is the RRM domain. An SURP motif repeat occupies 430 to 473 (LIHRMIEFVVREGPMFEAMIMNREINNPMFRFLFENQTPAHVYY). Phosphoserine is present on S485. The CID domain maps to 534-679 (LKEEQRDKLE…KLQNIFLGLV (146 aa)). Phosphothreonine is present on T719. Residues K748 and K749 each participate in a glycyl lysine isopeptide (Lys-Gly) (interchain with G-Cter in SUMO2) cross-link. At K760 the chain carries N6-acetyllysine; alternate. Residue K760 forms a Glycyl lysine isopeptide (Lys-Gly) (interchain with G-Cter in SUMO2); alternate linkage. Disordered regions lie at residues 778-841 (KWEL…EEKR) and 855-1029 (QDEL…KNKH). A compositionally biased stretch (acidic residues) spans 786–806 (EESEEEENQNQEEESEDEEDT). 3 positions are modified to phosphoserine: S788, S800, and S811. Composition is skewed to basic and acidic residues over residues 810–841 (KSEE…EEKR) and 874–922 (QVEH…TPTR). Residues K822, K829, and K832 each participate in a glycyl lysine isopeptide (Lys-Gly) (interchain with G-Cter in SUMO2) cross-link. Positions 837 to 915 (SEEKRAKLRE…ESRSKDKKEK (79 aa)) form a coiled coil. T931 carries the phosphothreonine modification. Phosphoserine occurs at positions 946 and 948. Residues 950–980 (KSERSERSERSHKESSRSRSSHKDSPRDVSK) are compositionally biased toward basic and acidic residues. Residues 991–1029 (TPKRSRRSRSRSPKKSGKKSRSQSRSPHRSHKKSKKNKH) are compositionally biased toward basic residues.

Belongs to the splicing factor SR family. In terms of assembly, interacts with ERBB4.

The protein localises to the nucleus. The sequence is that of U2 snRNP-associated SURP motif-containing protein (U2SURP) from Homo sapiens (Human).